The sequence spans 283 residues: uncharacterized protein (283 aa).

The next 3 helical transmembrane spans lie at 24–44 (LFGY…GMFI), 64–84 (TIAG…TLIA), and 96–116 (VIAI…GSLS).

The protein belongs to the MscS (TC 1.A.23) family.

Its subcellular location is the cell membrane. This is an uncharacterized protein from Buchnera aphidicola subsp. Schizaphis graminum (strain Sg).